The chain runs to 100 residues: Urease subunit gamma (100 aa).

The protein belongs to the urease gamma subunit family. In terms of assembly, heterotrimer of UreA (gamma), UreB (beta) and UreC (alpha) subunits. Three heterotrimers associate to form the active enzyme.

The protein localises to the cytoplasm. It catalyses the reaction urea + 2 H2O + H(+) = hydrogencarbonate + 2 NH4(+). It functions in the pathway nitrogen metabolism; urea degradation; CO(2) and NH(3) from urea (urease route): step 1/1. The chain is Urease subunit gamma from Klebsiella pneumoniae.